The sequence spans 92 residues: Small ribosomal subunit protein uS19 (92 aa).

This sequence belongs to the universal ribosomal protein uS19 family.

In terms of biological role, protein S19 forms a complex with S13 that binds strongly to the 16S ribosomal RNA. In Staphylococcus carnosus (strain TM300), this protein is Small ribosomal subunit protein uS19.